We begin with the raw amino-acid sequence, 191 residues long: Sec-independent protein translocase protein TatB (191 aa).

The chain crosses the membrane as a helical span at residues 1-21 (MFDIGFSELFLILVIGLLVLG). The segment covering 119–138 (ESTSQTLTEQLTPSEQVTEA) has biased composition (polar residues). Disordered stretches follow at residues 119 to 139 (ESTS…TEAT) and 168 to 191 (DDDD…DKKA). Positions 181–191 (PQTEEIQDKKA) are enriched in basic and acidic residues.

The protein belongs to the TatB family. In terms of assembly, the Tat system comprises two distinct complexes: a TatABC complex, containing multiple copies of TatA, TatB and TatC subunits, and a separate TatA complex, containing only TatA subunits. Substrates initially bind to the TatABC complex, which probably triggers association of the separate TatA complex to form the active translocon.

Its subcellular location is the cell inner membrane. Its function is as follows. Part of the twin-arginine translocation (Tat) system that transports large folded proteins containing a characteristic twin-arginine motif in their signal peptide across membranes. Together with TatC, TatB is part of a receptor directly interacting with Tat signal peptides. TatB may form an oligomeric binding site that transiently accommodates folded Tat precursor proteins before their translocation. This Pasteurella multocida (strain Pm70) protein is Sec-independent protein translocase protein TatB.